A 195-amino-acid polypeptide reads, in one-letter code: Peptidyl-tRNA hydrolase (195 aa).

Tyrosine 18 is a binding site for tRNA. Histidine 23 acts as the Proton acceptor in catalysis. Residues phenylalanine 69, asparagine 71, and asparagine 117 each contribute to the tRNA site.

This sequence belongs to the PTH family. In terms of assembly, monomer.

The protein localises to the cytoplasm. The catalysed reaction is an N-acyl-L-alpha-aminoacyl-tRNA + H2O = an N-acyl-L-amino acid + a tRNA + H(+). In terms of biological role, hydrolyzes ribosome-free peptidyl-tRNAs (with 1 or more amino acids incorporated), which drop off the ribosome during protein synthesis, or as a result of ribosome stalling. Catalyzes the release of premature peptidyl moieties from peptidyl-tRNA molecules trapped in stalled 50S ribosomal subunits, and thus maintains levels of free tRNAs and 50S ribosomes. This chain is Peptidyl-tRNA hydrolase, found in Hahella chejuensis (strain KCTC 2396).